Here is a 398-residue protein sequence, read N- to C-terminus: Digeranylgeranylglycerophospholipid reductase (398 aa).

Residues Ala15, Glu34, Cys45, Ala46, Gly48, Arg99, Ala123, Asp280, Gly292, and Ile293 each contribute to the FAD site. Residue Val372 participates in a 2,3-bis-O-(geranylgeranyl)-sn-glycerol 1-phospholipid binding.

It belongs to the geranylgeranyl reductase family. DGGGPL reductase subfamily. Requires FAD as cofactor.

It carries out the reaction a 2,3-bis-O-phytanyl-sn-glycerol 1-phospholipid + 8 oxidized 2[4Fe-4S]-[ferredoxin] = a 2,3-bis-O-(geranylgeranyl)-sn-glycerol 1-phospholipid + 8 reduced 2[4Fe-4S]-[ferredoxin] + 16 H(+). It catalyses the reaction 2,3-bis-O-(phytanyl)-sn-glycerol 1-phosphate + 8 oxidized 2[4Fe-4S]-[ferredoxin] = 2,3-bis-O-(geranylgeranyl)-sn-glycerol 1-phosphate + 8 reduced 2[4Fe-4S]-[ferredoxin] + 16 H(+). The catalysed reaction is a 2,3-bis-O-phytanyl-sn-glycerol 1-phospholipid + 8 A = a 2,3-bis-O-(geranylgeranyl)-sn-glycerol 1-phospholipid + 8 AH2. The enzyme catalyses CDP-2,3-bis-O-(geranylgeranyl)-sn-glycerol + 8 AH2 = CDP-2,3-bis-O-(phytanyl)-sn-glycerol + 8 A. It carries out the reaction archaetidylserine + 8 AH2 = 2,3-bis-O-phytanyl-sn-glycero-3-phospho-L-serine + 8 A. Its pathway is membrane lipid metabolism; glycerophospholipid metabolism. In terms of biological role, is involved in the reduction of 2,3-digeranylgeranylglycerophospholipids (unsaturated archaeols) into 2,3-diphytanylglycerophospholipids (saturated archaeols) in the biosynthesis of archaeal membrane lipids. Catalyzes the formation of archaetidic acid (2,3-di-O-phytanyl-sn-glyceryl phosphate) from 2,3-di-O-geranylgeranylglyceryl phosphate (DGGGP) via the hydrogenation of each double bond of the isoprenoid chains. Is also probably able to reduce double bonds of geranyl groups in CDP-2,3-bis-O-(geranylgeranyl)-sn-glycerol and archaetidylserine, thus acting at various stages in the biosynthesis of archaeal membrane lipids. This chain is Digeranylgeranylglycerophospholipid reductase, found in Methanoculleus marisnigri (strain ATCC 35101 / DSM 1498 / JR1).